The following is a 37-amino-acid chain: Potassium channel toxin alpha-KTx 4.3 (37 aa).

Disulfide bonds link C7-C28, C13-C33, and C17-C35. Positions G26 to C33 are interaction with Ca(2+)-activated K(+) channels.

As to expression, expressed by the venom gland.

It is found in the secreted. Functionally, blocks reversibly Shaker B potassium-channels. The polypeptide is Potassium channel toxin alpha-KTx 4.3 (Tityus discrepans (Venezuelan scorpion)).